The following is a 201-amino-acid chain: ATP-dependent Clp protease proteolytic subunit 2 (201 aa).

The active-site Nucleophile is Ser100. Residue His125 is part of the active site.

It belongs to the peptidase S14 family. As to quaternary structure, fourteen ClpP subunits assemble into 2 heptameric rings which stack back to back to give a disk-like structure with a central cavity, resembling the structure of eukaryotic proteasomes.

It localises to the cytoplasm. It catalyses the reaction Hydrolysis of proteins to small peptides in the presence of ATP and magnesium. alpha-casein is the usual test substrate. In the absence of ATP, only oligopeptides shorter than five residues are hydrolyzed (such as succinyl-Leu-Tyr-|-NHMec, and Leu-Tyr-Leu-|-Tyr-Trp, in which cleavage of the -Tyr-|-Leu- and -Tyr-|-Trp bonds also occurs).. In terms of biological role, cleaves peptides in various proteins in a process that requires ATP hydrolysis. Has a chymotrypsin-like activity. Plays a major role in the degradation of misfolded proteins. The sequence is that of ATP-dependent Clp protease proteolytic subunit 2 from Corynebacterium glutamicum (strain ATCC 13032 / DSM 20300 / JCM 1318 / BCRC 11384 / CCUG 27702 / LMG 3730 / NBRC 12168 / NCIMB 10025 / NRRL B-2784 / 534).